A 133-amino-acid chain; its full sequence is Small ribosomal subunit protein uS8 (133 aa).

Belongs to the universal ribosomal protein uS8 family. In terms of assembly, part of the 30S ribosomal subunit. Contacts proteins S5 and S12.

In terms of biological role, one of the primary rRNA binding proteins, it binds directly to 16S rRNA central domain where it helps coordinate assembly of the platform of the 30S subunit. This is Small ribosomal subunit protein uS8 from Chloroflexus aurantiacus (strain ATCC 29364 / DSM 637 / Y-400-fl).